Here is an 82-residue protein sequence, read N- to C-terminus: Small ribosomal subunit protein bS16 (82 aa).

It belongs to the bacterial ribosomal protein bS16 family.

The protein is Small ribosomal subunit protein bS16 of Microcystis aeruginosa (strain NIES-843 / IAM M-2473).